A 201-amino-acid polypeptide reads, in one-letter code: Probable DNA replication complex GINS protein PSF1 (201 aa).

This sequence belongs to the GINS1/PSF1 family. As to quaternary structure, component of the GINS complex which is a heterotetramer of gins1, gins2, gins3 and gins4.

Its subcellular location is the nucleus. The GINS complex plays an essential role in the initiation of DNA replication. In Caenorhabditis briggsae, this protein is Probable DNA replication complex GINS protein PSF1.